Consider the following 904-residue polypeptide: Disintegrin and metalloproteinase domain-containing protein 22 (904 aa).

The N-terminal stretch at 1 to 23 (MQAAAAASFWLLCVLGTCPLARC) is a signal peptide. Residues 24 to 223 (GRAGVASLKG…LKPRLKRRKR (200 aa)) constitute a propeptide that is removed on maturation. The Extracellular segment spans residues 24–734 (GRAGVASLKG…LSGNGVAGTN (711 aa)). N-linked (GlcNAc...) asparagine glycosylation is present at asparagine 163. The Peptidase M12B domain occupies 237–436 (KYIELMIVND…GGGACLFNKP (200 aa)). 17 cysteine pairs are disulfide-bonded: cysteine 347–cysteine 431, cysteine 390–cysteine 415, cysteine 392–cysteine 399, cysteine 445–cysteine 475, cysteine 456–cysteine 472, cysteine 458–cysteine 464, cysteine 471–cysteine 492, cysteine 483–cysteine 489, cysteine 488–cysteine 514, cysteine 501–cysteine 521, cysteine 508–cysteine 540, cysteine 533–cysteine 545, cysteine 552–cysteine 603, cysteine 567–cysteine 633, cysteine 581–cysteine 591, cysteine 598–cysteine 661, and cysteine 655–cysteine 666. Residues 442–529 (PPECGNGFIE…QCAPNVHKMD (88 aa)) enclose the Disintegrin domain. An N-linked (GlcNAc...) asparagine glycan is attached at asparagine 517. Asparagine 632 carries an N-linked (GlcNAc...) asparagine glycan. An N-linked (GlcNAc...) asparagine glycan is attached at asparagine 673. The 38-residue stretch at 673-710 (NFSTCSSSKAGTVCSGNGVCSNELKCVCNRHWTGADCG) folds into the EGF-like domain. 3 disulfide bridges follow: cysteine 677–cysteine 692, cysteine 686–cysteine 698, and cysteine 700–cysteine 709. A helical membrane pass occupies residues 735 to 755 (IIIGIIAGTILVLALILGITA). The Cytoplasmic portion of the chain corresponds to 756-857 (WGYKNYREQR…RFRPRSNSTE (102 aa)). Residues 769–904 (QGDYVKKPGD…QSARLWETSI (136 aa)) form a disordered region. Low complexity predominate over residues 789-808 (GGSTNSASSSKKRSNGLSHS). 3 positions are modified to phosphoserine: serine 808, lysine 817, and serine 832. Residues 809–827 (WSERIPDTKHISDICENGR) are compositionally biased toward basic and acidic residues. Residues 840 to 851 (NKKKIRGKRFRP) show a composition bias toward basic residues. Serine 855, serine 860, serine 864, serine 868, and methionine 882 each carry phosphoserine. The span at 860–875 (SPAKSPSSSTGSIASS) shows a compositional bias: low complexity.

In terms of assembly, interacts with LGI1. Can bind to LGI4. Interacts with KCNA2, DLG2 and DLG4. Interacts with ADAM11. Interacts (via C-terminus) with YWHAB/14-3-3 beta. Interacts (via C-terminus) with YWHAZ/14-3-3 zeta. In terms of processing, the precursor is cleaved by a furin endopeptidase. In terms of tissue distribution, detected in juxtaparanodal zones in the central nervous system and at nerve terminal plexuses of basket cells in the cerebellum (at protein level). Expressed at high levels in the brain. Strongly expressed in cerebellar granule cells and hippocampus. In spinal cord, expression is restricted to gray matter.

It is found in the cell membrane. It localises to the cell projection. The protein localises to the axon. Functionally, probable ligand for integrin in the brain. This is a non catalytic metalloprotease-like protein. Involved in regulation of cell adhesion and spreading and in inhibition of cell proliferation. Neuronal receptor for LGI1. The chain is Disintegrin and metalloproteinase domain-containing protein 22 (Adam22) from Mus musculus (Mouse).